The primary structure comprises 852 residues: MKILLFFILFYLFSFSISYDEVIPLGYESHNDSLVIRYREIENYYTNISFLWKGKSRYDMSFNCVLNNTIRTCTLPVKESDHAQMYSEEISACTENNGTFKMCGYDLPLFYFPSPLLISEFKPKTRGGNTTLSGYYLELKERIYVQFENSYRKDQFFYSGYVYLIPGVFQSKTPDRINLILKVYPGCGYRTIIWENHETLNFTYQEPNIEKIDINQSFLDITGTNFYNQSIFVSVKIDNNIIDPNDIISVDFEIIKLKFNYSDPFSSKFNVQVGCCDYWSSQFQITYPPIPSIVNSIPKLKGGLLIINGNRLTSSPSSSNNNNISVTVGDSICSIVSSSSNEIKCNLQPLSNSTFNNSSPIAVSINDVVNTNTLLLIYDTPYITTFSQVNDEIHIIGGCFGNINSTQIHINDKQVFGQIKSINNDETDLILKIQNQIYNFNISIESNSIKSNGINVDVEMYARINEIPLVSNKLINFTLFYVNSSNINLIPTIKIINEKSNQTSKSISTNVNESVVSCSFLIENNCGIINYEIEIGNQIYQSSFSYESPLINKCNLNSNEIVTCIGKGFVNKYNETSIFISGQSIALSKEINNSIYESISFQMNDEYNILGELYLNVCGLLSNKVNINTFPIFKNVSIPNLFDTNGGNIIIIGKYLNNNTNFTIECNGEQIIEKECKLNNSSTSLECYIKLNGPNGKTCKLLFNNDNNIVSTFSFIYKSPSINQTSIINLKQGGILTIIGNDFYYPIDKVTIIGNGNGSGNSSLNCNEAKYINDTMITCFIQATNYTFNNIKNGEMIFINVSTNGKSGISKVFKYLTQSDDVHQYSDARNIFQNLLLSILIIIIISLFISNI.

A signal peptide spans 1 to 18; that stretch reads MKILLFFILFYLFSFSIS. The Extracellular segment spans residues 19–830; that stretch reads YDEVIPLGYE…DVHQYSDARN (812 aa). Asparagine 31, asparagine 47, asparagine 67, asparagine 97, asparagine 129, asparagine 201, asparagine 215, asparagine 228, asparagine 260, asparagine 323, asparagine 352, asparagine 356, asparagine 404, asparagine 441, asparagine 476, asparagine 483, asparagine 501, asparagine 512, asparagine 574, asparagine 592, asparagine 635, asparagine 658, asparagine 661, asparagine 679, asparagine 680, asparagine 723, asparagine 757, asparagine 761, asparagine 773, asparagine 785, and asparagine 800 each carry an N-linked (GlcNAc...) asparagine glycan. An IPT/TIG domain is found at 290 to 367; sequence IPSIVNSIPK…SSPIAVSIND (78 aa). The helical transmembrane segment at 831–851 threads the bilayer; it reads IFQNLLLSILIIIIISLFISN. Position 852 (isoleucine 852) is a topological domain, cytoplasmic.

Its subcellular location is the membrane. In Dictyostelium discoideum (Social amoeba), this protein is Tiger protein I3 (tgrI3).